Reading from the N-terminus, the 393-residue chain is Seven-bladed beta-propeller protein Rv1057 (393 aa).

Positions 208-230 are disordered; sequence DGGRIGSRSRSRQKSSKPRGNQA. The segment covering 214 to 224 has biased composition (basic residues); it reads SRSRSRQKSSK.

Functionally, may play an important role in host-pathogen interactions and in ESAT-6 secretion. The sequence is that of Seven-bladed beta-propeller protein Rv1057 from Mycobacterium tuberculosis (strain ATCC 25618 / H37Rv).